Reading from the N-terminus, the 1012-residue chain is F-box DNA helicase 1 (1012 aa).

Residues 1–54 (MHLTADDCEALSRSTEGLSSLTQPLNQRRSRGDVNRGLQPTHRTRTQPGAQGRQ) are disordered. Residues 12 to 27 (SRSTEGLSSLTQPLNQ) are compositionally biased toward polar residues. An F-box domain is found at 185–234 (QGSIEDLPDEVLRSIFAFLPVTDLYQSLSLVCRRWRIIVGDPWFIPWKKL). The UvrD-like helicase ATP-binding domain maps to 427–692 (THEQQRILNH…YYLTQSFRFG (266 aa)). ATP is bound at residue 448–455 (AFAGTGKT).

The protein belongs to the helicase family. UvrD subfamily. Part of the SCF (SKP1-CUL1-F-box) E3 ubiquitin-protein ligase complex SCF(FBH1).

Its subcellular location is the nucleus. The protein localises to the chromosome. The catalysed reaction is Couples ATP hydrolysis with the unwinding of duplex DNA by translocating in the 3'-5' direction.. It catalyses the reaction ATP + H2O = ADP + phosphate + H(+). Its pathway is protein modification; protein ubiquitination. Functionally, 3'-5' DNA helicase and substrate-recognition component of the SCF(FBH1) E3 ubiquitin ligase complex that plays a key role in response to stalled/damaged replication forks. Involved in genome maintenance by acting as an anti-recombinogenic helicase and preventing extensive strand exchange during homologous recombination: promotes RAD51 filament dissolution from stalled forks, thereby inhibiting homologous recombination and preventing excessive recombination. Also promotes cell death and DNA double-strand breakage in response to replication stress: promotes the endonucleolytic DNA cleavage following prolonged replication stress via its helicase activity, possibly to eliminate cells with excessive replication stress. This chain is F-box DNA helicase 1, found in Gallus gallus (Chicken).